The primary structure comprises 218 residues: MGCSASKDTTNSKDGAASKGGKDGKTTADRKVAWERIRCAIPRDKDAESKSRRIELFKQFDTNGTGKLGFREVLDGCYGILKLDEFTTHLPDIVQRAFDKAKDLGNKVKGVGEEDLVEFLEFRLMLCYIYDIFELTVMFDTMDKDGSLLLELQEFKEALPKLKEWGVDITDATTVFNEIDTNGSGVVTFDEFSCWAVTKKLQVCGDPDGEENGANEGN.

Residues 1–27 (MGCSASKDTTNSKDGAASKGGKDGKTT) are disordered. EF-hand domains are found at residues 48 to 83 (ESKS…ILKL), 84 to 119 (DEFT…LVEF), 130 to 165 (YDIF…LKEW), and 167 to 202 (VDIT…KKLQ). Ca(2+) contacts are provided by D61, N63, T65, K67, and E72. Positions 143, 145, 147, 154, 180, 182, 184, and 191 each coordinate Ca(2+).

Belongs to the calflagin family.

It is found in the cell projection. The protein localises to the cilium. The protein resides in the flagellum. May contribute to the rapid motility of the trypanosomes, playing a role either in flagellar structure or in calcium metabolism. Could alternate between a GDP-bound inactive form to a calcium/GTP-bound active form. The protein is Flagellar calcium-binding protein TB-24 of Trypanosoma brucei brucei.